The following is a 330-amino-acid chain: Aspartate--ammonia ligase (330 aa).

The protein belongs to the class-II aminoacyl-tRNA synthetase family. AsnA subfamily.

The protein resides in the cytoplasm. The catalysed reaction is L-aspartate + NH4(+) + ATP = L-asparagine + AMP + diphosphate + H(+). It participates in amino-acid biosynthesis; L-asparagine biosynthesis; L-asparagine from L-aspartate (ammonia route): step 1/1. This chain is Aspartate--ammonia ligase, found in Shigella sonnei (strain Ss046).